The primary structure comprises 557 residues: Polypyrimidine tract-binding protein 1 (557 aa).

N-acetylmethionine is present on M1. S16 carries the phosphoserine modification. RRM domains are found at residues 59 to 143, 184 to 260, and 363 to 437; these read RVIH…SSPN, LRII…FSKL, and SVLL…LSKH. A Glycyl lysine isopeptide (Lys-Gly) (interchain with G-Cter in SUMO2) cross-link involves residue K65. Y127 is subject to Phosphotyrosine. At T138 the chain carries Phosphothreonine. A Phosphoserine modification is found at S141. A Glycyl lysine isopeptide (Lys-Gly) (interchain with G-Cter in SUMO2) cross-link involves residue K218. S459 bears the Phosphoserine mark. The 76-residue stretch at 480 to 555 folds into the RRM 4 domain; that stretch reads ATLHLSNIPP…HHLRVSFSKS (76 aa).

As to quaternary structure, monomer. Part of a ternary complex containing KHSRP, PTBP1, PTBP2 and HNRPH1. Interacts with RAVER1 and SFPQ.

The protein resides in the nucleus. Functionally, plays a role in pre-mRNA splicing and in the regulation of alternative splicing events. Activates exon skipping of its own pre-mRNA during muscle cell differentiation. Binds to the polypyrimidine tract of introns. May promote RNA looping when bound to two separate polypyrimidine tracts in the same pre-mRNA. May promote the binding of U2 snRNP to pre-mRNA. Cooperates with RAVER1 to modulate switching between mutually exclusive exons during maturation of the TPM1 pre-mRNA. Represses the splicing of MAPT/Tau exon 10. Binds to polypyrimidine-rich controlling element (PCE) of CFTR and promotes exon skipping of CFTR exon 9, thereby antagonizing TIA1 and its role in exon inclusion of CFTR exon 9. Plays a role in the splicing of pyruvate kinase PKM by binding repressively to a polypyrimidine tract flanking PKM exon 9, inhibiting exon 9 inclusion and resulting in exon 10 inclusion and production of the PKM M2 isoform. The sequence is that of Polypyrimidine tract-binding protein 1 (PTBP1) from Sus scrofa (Pig).